Consider the following 123-residue polypeptide: WAP four-disulfide core domain protein 5 (123 aa).

The first 24 residues, Met1–Gly24, serve as a signal peptide directing secretion. WAP domains follow at residues Lys27–Arg73 and Val74–Ala121. Cystine bridges form between Cys34/Cys62, Cys41/Cys66, Cys49/Cys61, Cys55/Cys70, Cys81/Cys109, Cys88/Cys113, Cys96/Cys108, and Cys102/Cys117.

It localises to the secreted. Putative acid-stable proteinase inhibitor. The sequence is that of WAP four-disulfide core domain protein 5 (WFDC5) from Pan troglodytes (Chimpanzee).